A 316-amino-acid polypeptide reads, in one-letter code: MNDVSKVSLPKAIFLMGPTASGKTALAIELRKVLPVELISVDSALIYRGMDIGTAKPNADELKAAPHRLLDIRDPSQAYSAADFRRDALAQMAEITAAGRIPLLVGGTMLYFKALLEGLSPLPSADPEVRSRIEQQAAELGWEALHQQLQEIDPVAAARIHPNDPQRLSRALEVFFISGKTLTELTQTSGDALPYQVHQFAIAPASRELLHQRIELRFHQMLASGFEAEVRALFARGDLHTDLPSIRCVGYRQMWSYIEGEISYDEMVYRGVCSTRQLAKRQMTWLRGWEGVRWLDSENPDRARKEVLQVVGAIAD.

17–24 (GPTASGKT) serves as a coordination point for ATP. 19–24 (TASGKT) contributes to the substrate binding site. 3 interaction with substrate tRNA regions span residues 42–45 (DSAL), 166–170 (QRLSR), and 247–252 (RCVGYR).

It belongs to the IPP transferase family. Monomer. Mg(2+) serves as cofactor.

It carries out the reaction adenosine(37) in tRNA + dimethylallyl diphosphate = N(6)-dimethylallyladenosine(37) in tRNA + diphosphate. Functionally, catalyzes the transfer of a dimethylallyl group onto the adenine at position 37 in tRNAs that read codons beginning with uridine, leading to the formation of N6-(dimethylallyl)adenosine (i(6)A). In Salmonella typhi, this protein is tRNA dimethylallyltransferase.